A 158-amino-acid chain; its full sequence is 6,7-dimethyl-8-ribityllumazine synthase (158 aa).

Residues Phe22, 57–59, and 81–83 each bind 5-amino-6-(D-ribitylamino)uracil; these read AVE and AVI. Residue 86–87 participates in (2S)-2-hydroxy-3-oxobutyl phosphate binding; sequence GT. His89 acts as the Proton donor in catalysis. Phe114 serves as a coordination point for 5-amino-6-(D-ribitylamino)uracil. Arg128 provides a ligand contact to (2S)-2-hydroxy-3-oxobutyl phosphate.

Belongs to the DMRL synthase family. As to quaternary structure, forms an icosahedral capsid composed of 60 subunits, arranged as a dodecamer of pentamers.

It catalyses the reaction (2S)-2-hydroxy-3-oxobutyl phosphate + 5-amino-6-(D-ribitylamino)uracil = 6,7-dimethyl-8-(1-D-ribityl)lumazine + phosphate + 2 H2O + H(+). The protein operates within cofactor biosynthesis; riboflavin biosynthesis; riboflavin from 2-hydroxy-3-oxobutyl phosphate and 5-amino-6-(D-ribitylamino)uracil: step 1/2. Its function is as follows. Catalyzes the formation of 6,7-dimethyl-8-ribityllumazine by condensation of 5-amino-6-(D-ribitylamino)uracil with 3,4-dihydroxy-2-butanone 4-phosphate. This is the penultimate step in the biosynthesis of riboflavin. In Shewanella pealeana (strain ATCC 700345 / ANG-SQ1), this protein is 6,7-dimethyl-8-ribityllumazine synthase.